The sequence spans 781 residues: Molybdenum cofactor sulfurase (781 aa).

N6-(pyridoxal phosphate)lysine is present on K246. C413 is a catalytic residue. One can recognise an MOSC domain in the interval 619-781 (GDAVAQWLSE…MTCGDVVIVE (163 aa)). A Phosphoserine modification is found at S734.

This sequence belongs to the class-V pyridoxal-phosphate-dependent aminotransferase family. MOCOS subfamily. Pyridoxal 5'-phosphate is required as a cofactor.

It catalyses the reaction Mo-molybdopterin + L-cysteine + AH2 = thio-Mo-molybdopterin + L-alanine + A + H2O. It participates in cofactor biosynthesis; molybdopterin biosynthesis. Functionally, sulfurates the molybdenum cofactor. Sulfation of molybdenum is essential for xanthine dehydrogenase (XDH) and aldehyde oxidase (ADO) enzymes in which molybdenum cofactor is liganded by 1 oxygen and 1 sulfur atom in active form. This is Molybdenum cofactor sulfurase from Drosophila erecta (Fruit fly).